The sequence spans 39 residues: MQVNPNPNKVPVELNRTSLYLGLLLVFVMGILFSSYFFN.

Residues serine 18–phenylalanine 38 traverse the membrane as a helical segment.

The protein belongs to the PsbL family. PSII is composed of 1 copy each of membrane proteins PsbA, PsbB, PsbC, PsbD, PsbE, PsbF, PsbH, PsbI, PsbJ, PsbK, PsbL, PsbM, PsbT, PsbX, PsbY, Psb30/Ycf12, peripheral proteins PsbO, CyanoQ (PsbQ), PsbU, PsbV and a large number of cofactors. It forms dimeric complexes.

The protein localises to the cellular thylakoid membrane. One of the components of the core complex of photosystem II (PSII). PSII is a light-driven water:plastoquinone oxidoreductase that uses light energy to abstract electrons from H(2)O, generating O(2) and a proton gradient subsequently used for ATP formation. It consists of a core antenna complex that captures photons, and an electron transfer chain that converts photonic excitation into a charge separation. This subunit is found at the monomer-monomer interface and is required for correct PSII assembly and/or dimerization. The protein is Photosystem II reaction center protein L of Prochlorococcus marinus (strain NATL2A).